A 281-amino-acid polypeptide reads, in one-letter code: Ribosomal RNA small subunit methyltransferase A (281 aa).

Asn-36, Leu-38, Gly-63, Glu-84, Asp-109, and Asn-127 together coordinate S-adenosyl-L-methionine.

It belongs to the class I-like SAM-binding methyltransferase superfamily. rRNA adenine N(6)-methyltransferase family. RsmA subfamily.

It is found in the cytoplasm. The enzyme catalyses adenosine(1518)/adenosine(1519) in 16S rRNA + 4 S-adenosyl-L-methionine = N(6)-dimethyladenosine(1518)/N(6)-dimethyladenosine(1519) in 16S rRNA + 4 S-adenosyl-L-homocysteine + 4 H(+). Its function is as follows. Specifically dimethylates two adjacent adenosines (A1518 and A1519) in the loop of a conserved hairpin near the 3'-end of 16S rRNA in the 30S particle. May play a critical role in biogenesis of 30S subunits. The protein is Ribosomal RNA small subunit methyltransferase A of Borrelia garinii subsp. bavariensis (strain ATCC BAA-2496 / DSM 23469 / PBi) (Borreliella bavariensis).